Here is a 516-residue protein sequence, read N- to C-terminus: Putative thymidine phosphorylase (516 aa).

This sequence belongs to the thymidine/pyrimidine-nucleoside phosphorylase family. Type 2 subfamily.

It carries out the reaction thymidine + phosphate = 2-deoxy-alpha-D-ribose 1-phosphate + thymine. This is Putative thymidine phosphorylase from Methylococcus capsulatus (strain ATCC 33009 / NCIMB 11132 / Bath).